A 432-amino-acid polypeptide reads, in one-letter code: Luc7-like protein 3 (432 aa).

N-acetylmethionine is present on Met1. Ser3, Ser110, and Ser115 each carry phosphoserine. Residues 124–181 (KNEEKIQVLTDKIDVLLQQIEELGSEGKVEEAQGMMKLVEQLKEERELLRSTTSTIES) adopt a coiled-coil conformation. Lys231 carries the post-translational modification N6-acetyllysine. The span at 234–287 (LRKRTEEPDRDERLKKEKQEREEREKEREREREERERKRRREEEEREKERARDR) shows a compositional bias: basic and acidic residues. The segment at 234–432 (LRKRTEEPDR…IKSEGDTQSN (199 aa)) is disordered. A compositionally biased stretch (basic residues) spans 288–301 (ERRKRSRSRSRHSS). Over residues 302-311 (RTSDRRCSRS) the composition is skewed to basic and acidic residues. A compositionally biased stretch (basic residues) spans 312–367 (RDHKRSRSRERRRSRSRDRRRSRSHDRSERKHRSRSRDRRRSKSRDRKSYKHRSKS). Positions 368–414 (RDREQDRKSKEKEKRGSDDKKSSVKSGSREKQSEDTNTESKESDTKN) are enriched in basic and acidic residues. Ser420 carries the post-translational modification Phosphoserine. Residues 421–432 (EDIKSEGDTQSN) show a composition bias toward basic and acidic residues. A Glycyl lysine isopeptide (Lys-Gly) (interchain with G-Cter in SUMO1); alternate cross-link involves residue Lys424. Residue Lys424 forms a Glycyl lysine isopeptide (Lys-Gly) (interchain with G-Cter in SUMO2); alternate linkage. Phosphoserine is present on residues Ser425 and Ser431.

The protein belongs to the Luc7 family. In terms of assembly, may interact with SFRS1 and form homodimers. Interacts with JMJD6. Interacts with RBM25. Interacts with RSRC1 (via Arg/Ser-rich domain). Interacts with RRP1B. In terms of processing, phosphorylated in vitro by SRPK1, SRPK2 and CLK1. Widely expressed. Highest levels in heart, brain, pancreas, thymus, ovary, small intestine and peripheral blood leukocytes, as well as cerebellum, putamen and pituitary gland. Lowest levels in lung, liver and kidney. Also expressed in fetal tissues, including brain, heart, kidney, thymus and lung.

The protein resides in the nucleus speckle. Binds cAMP regulatory element DNA sequence. May play a role in RNA splicing. This Homo sapiens (Human) protein is Luc7-like protein 3 (LUC7L3).